The primary structure comprises 76 residues: Cytochrome c oxidase subunit 6C-1 (76 aa).

Residues 4–14 (GALLPKPQMHD) lie on the Mitochondrial matrix side of the membrane. The chain crosses the membrane as a helical span at residues 15–55 (PLSKRLWVHIVGAFIVDLGVAAAHKFGAAKPRKKAYADFYR). At 56–76 (NHDPMKDFDEMRKAGVFRSVK) the chain is on the mitochondrial intermembrane side.

This sequence belongs to the cytochrome c oxidase subunit 6c family. As to quaternary structure, component of the cytochrome c oxidase (complex IV, CIV), a multisubunit enzyme composed of 14 subunits. The complex is composed of a catalytic core of 3 subunits MT-CO1, MT-CO2 and MT-CO3, encoded in the mitochondrial DNA, and 11 supernumerary subunits COX4I, COX5A, COX5B, COX6A, COX6B, COX6C, COX7A, COX7B, COX7C, COX8 and NDUFA4, which are encoded in the nuclear genome. The complex exists as a monomer or a dimer and forms supercomplexes (SCs) in the inner mitochondrial membrane with NADH-ubiquinone oxidoreductase (complex I, CI) and ubiquinol-cytochrome c oxidoreductase (cytochrome b-c1 complex, complex III, CIII), resulting in different assemblies (supercomplex SCI(1)III(2)IV(1) and megacomplex MCI(2)III(2)IV(2)).

The protein localises to the mitochondrion inner membrane. Its pathway is energy metabolism; oxidative phosphorylation. Component of the cytochrome c oxidase, the last enzyme in the mitochondrial electron transport chain which drives oxidative phosphorylation. The respiratory chain contains 3 multisubunit complexes succinate dehydrogenase (complex II, CII), ubiquinol-cytochrome c oxidoreductase (cytochrome b-c1 complex, complex III, CIII) and cytochrome c oxidase (complex IV, CIV), that cooperate to transfer electrons derived from NADH and succinate to molecular oxygen, creating an electrochemical gradient over the inner membrane that drives transmembrane transport and the ATP synthase. Cytochrome c oxidase is the component of the respiratory chain that catalyzes the reduction of oxygen to water. Electrons originating from reduced cytochrome c in the intermembrane space (IMS) are transferred via the dinuclear copper A center (CU(A)) of subunit 2 and heme A of subunit 1 to the active site in subunit 1, a binuclear center (BNC) formed by heme A3 and copper B (CU(B)). The BNC reduces molecular oxygen to 2 water molecules using 4 electrons from cytochrome c in the IMS and 4 protons from the mitochondrial matrix. This is Cytochrome c oxidase subunit 6C-1 (Cox6c1) from Rattus norvegicus (Rat).